Reading from the N-terminus, the 559-residue chain is Potassium-transporting ATPase potassium-binding subunit (559 aa).

13 consecutive transmembrane segments (helical) span residues 5–25, 27–47, 63–83, 132–152, 170–190, 253–273, 283–303, 327–347, 356–376, 379–399, 416–436, 484–504, and 524–544; these read GFLLIASFLLILLVLAKPLGS, LARLIAAVPLPGVAGVERILW, LLALLTLNLLGLGILFCLLFW, GLTVQNFLSAATGIAVVFALI, LVRITLWILFPVALIIALFFI, LAQMLAIFLIPAALCFAFGEA, LLWAMSFIFVVCVAVVMWAEV, FGVLASSLFAVVTTAASCGAV, ALGGMVPMWLMQIGEVVFGGV, GLYGMLLFVLLAVFIAGLMIG, MTALAILVTPMLVLLGSALAM, LLAFCMFVGRFGVIIPVMAIA, and GALFIGLLIGTVLLVGALTFI.

The protein belongs to the KdpA family. In terms of assembly, the system is composed of three essential subunits: KdpA, KdpB and KdpC.

It is found in the cell inner membrane. In terms of biological role, part of the high-affinity ATP-driven potassium transport (or Kdp) system, which catalyzes the hydrolysis of ATP coupled with the electrogenic transport of potassium into the cytoplasm. This subunit binds the periplasmic potassium ions and delivers the ions to the membrane domain of KdpB through an intramembrane tunnel. The polypeptide is Potassium-transporting ATPase potassium-binding subunit (Salmonella choleraesuis (strain SC-B67)).